Here is a 30-residue protein sequence, read N- to C-terminus: Cysteine-rich venom protein hematin (30 aa).

This sequence belongs to the CRISP family. In terms of processing, contains 8 disulfide bonds. As to expression, expressed by the venom gland.

The protein localises to the secreted. Inhibits calcium-activated potassium channels (KCa), voltage-gated potassium channel (Kv), and the calcium release channel/ryanodine receptor (RyR). The chain is Cysteine-rich venom protein hematin from Hemachatus haemachatus (Rinkhals).